The chain runs to 229 residues: DNA repair protein RecO (229 aa).

It belongs to the RecO family.

Its function is as follows. Involved in DNA repair and RecF pathway recombination. The sequence is that of DNA repair protein RecO from Legionella pneumophila subsp. pneumophila (strain Philadelphia 1 / ATCC 33152 / DSM 7513).